The primary structure comprises 947 residues: Serine-aspartate repeat-containing protein C (947 aa).

The signal sequence occupies residues 1-50; sequence MNNKKTATNRKGMIPNRLNKFSIRKYSVGTASILVGTTLIFGLSGHEAKA. Residues 51–164 form a disordered region; that stretch reads AEHTNGELNQ…STTPKTTTIK (114 aa). The ligand binding A region stretch occupies residues 51–495; the sequence is AEHTNGELNQ…GSSTANGDQK (445 aa). Over residues 56 to 71 the composition is skewed to polar residues; it reads GELNQSKNETTAPSEN. Positions 72–83 are enriched in basic and acidic residues; that stretch reads KTTKKVDSRQLK. Positions 84-155 are enriched in polar residues; that stretch reads DNTQTATADQ…SNLTQAKDVS (72 aa). CNA-B domains follow at residues 496–606 and 607–717; these read KYNL…YKTP and KYSL…EEET. Positions 678 to 927 are disordered; it reads TQTGTNTTED…NNSNNGTLFG (250 aa). Acidic residues-rich tracts occupy residues 685–695 and 712–886; these read TEDDKDADGGE and YYEE…DSDS. An LPXTG sorting signal motif is present at residues 910–914; it reads LPETG. Residues 912 to 927 are compositionally biased toward low complexity; sequence ETGSENNNSNNGTLFG. Residue threonine 913 is modified to Pentaglycyl murein peptidoglycan amidated threonine. Positions 914–947 are cleaved as a propeptide — removed by sortase; the sequence is GSENNNSNNGTLFGGLFAALGSLLLFGRRKKQNK.

The protein belongs to the serine-aspartate repeat-containing protein (SDr) family. In terms of assembly, homodimerizes; via N2-Domain. Interacts with host NRXN1; this interaction mediates bacterial attachment to host cells.

The protein resides in the secreted. It localises to the cell wall. Cell surface-associated calcium-binding protein which plays an important role in adhesion and pathogenesis. Mediates interactions with components of the extracellular matrix such as host NRXN1 to promote bacterial adhesion. This is Serine-aspartate repeat-containing protein C (sdrC) from Staphylococcus aureus (strain USA300).